We begin with the raw amino-acid sequence, 960 residues long: Lon protease homolog, mitochondrial (960 aa).

A mitochondrion-targeting transit peptide spans 1-56 (MYRAGALVLRSATLRRTRFLAAHQNFATISSQRSSVLLAKSLESSIGGAGNQKKFY). Positions 92 to 352 (VPILAINRYP…IALLLIQKEK (261 aa)) constitute a Lon N-terminal domain. Residues 195–250 (PKTDTPLNGRRARGKRAGLPPTPPPTPPLSTPTSAPEASATSPEEKEEKKDPERKG) are disordered. The span at 214-224 (PPTPPPTPPLS) shows a compositional bias: pro residues. The span at 225 to 236 (TPTSAPEASATS) shows a compositional bias: low complexity. Positions 237–250 (PEEKEEKKDPERKG) are enriched in basic and acidic residues. 505-512 (GPPGVGKT) lines the ATP pocket. The disordered stretch occupies residues 712 to 748 (EQQPEDEQPAATTAISENSDAEPVSTPSDPPTFTPEK). Residues 773–960 (VTPPGVIMGL…YDELYEHLFQ (188 aa)) enclose the Lon proteolytic domain. Residues serine 867 and lysine 910 contribute to the active site.

It belongs to the peptidase S16 family. As to quaternary structure, homohexamer or homoheptamer. Organized in a ring with a central cavity.

It is found in the mitochondrion matrix. The enzyme catalyses Hydrolysis of proteins in presence of ATP.. Its function is as follows. ATP-dependent serine protease that mediates the selective degradation of misfolded, unassembled or oxidatively damaged polypeptides as well as certain short-lived regulatory proteins in the mitochondrial matrix. May also have a chaperone function in the assembly of inner membrane protein complexes. Participates in the regulation of mitochondrial gene expression and in the maintenance of the integrity of the mitochondrial genome. Binds to mitochondrial DNA in a site-specific manner. This is Lon protease homolog, mitochondrial from Caenorhabditis briggsae.